The following is a 506-amino-acid chain: MAP kinase kinase MKK2/SSP33 (506 aa).

Positions methionine 1–asparagine 69 are disordered. Residues leucine 26–tyrosine 52 show a composition bias toward polar residues. Residues serine 53–asparagine 69 show a composition bias toward low complexity. The Protein kinase domain maps to isoleucine 214 to isoleucine 481. ATP-binding positions include leucine 220–valine 228 and lysine 243. Aspartate 342 (proton acceptor) is an active-site residue.

This sequence belongs to the protein kinase superfamily. STE Ser/Thr protein kinase family. MAP kinase kinase subfamily.

The enzyme catalyses L-seryl-[protein] + ATP = O-phospho-L-seryl-[protein] + ADP + H(+). It catalyses the reaction L-threonyl-[protein] + ATP = O-phospho-L-threonyl-[protein] + ADP + H(+). The catalysed reaction is L-tyrosyl-[protein] + ATP = O-phospho-L-tyrosyl-[protein] + ADP + H(+). In terms of biological role, serine/threonine protein kinase involved in a signal transduction pathway that plays a role in yeast cell morphogenesis and cell growth. This pathway seems to start by SMP3; then involves the kinase PKC1 that may act on the BCK1 kinase that then phosphorylates MKK1 and MKK2 which themselves phosphorylate the MPK1 kinase. This Saccharomyces cerevisiae (strain ATCC 204508 / S288c) (Baker's yeast) protein is MAP kinase kinase MKK2/SSP33 (MKK2).